Consider the following 300-residue polypeptide: UDP-N-acetylenolpyruvoylglucosamine reductase (300 aa).

The FAD-binding PCMH-type domain maps to 28–193; it reads KTGGPADWLA…LDATFALKLG (166 aa). Residue R172 is part of the active site. S222 acts as the Proton donor in catalysis. The active site involves E292.

It belongs to the MurB family. The cofactor is FAD.

It localises to the cytoplasm. The catalysed reaction is UDP-N-acetyl-alpha-D-muramate + NADP(+) = UDP-N-acetyl-3-O-(1-carboxyvinyl)-alpha-D-glucosamine + NADPH + H(+). It participates in cell wall biogenesis; peptidoglycan biosynthesis. In terms of biological role, cell wall formation. This Limosilactobacillus fermentum (strain NBRC 3956 / LMG 18251) (Lactobacillus fermentum) protein is UDP-N-acetylenolpyruvoylglucosamine reductase.